A 101-amino-acid chain; its full sequence is NADH-quinone oxidoreductase subunit K (101 aa).

3 helical membrane-spanning segments follow: residues 4–24 (LAHY…GIFL), 30–50 (IIIL…FVAF), and 61–81 (IFVF…LAIL).

Belongs to the complex I subunit 4L family. In terms of assembly, NDH-1 is composed of 14 different subunits. Subunits NuoA, H, J, K, L, M, N constitute the membrane sector of the complex.

The protein localises to the cell inner membrane. The catalysed reaction is a quinone + NADH + 5 H(+)(in) = a quinol + NAD(+) + 4 H(+)(out). Functionally, NDH-1 shuttles electrons from NADH, via FMN and iron-sulfur (Fe-S) centers, to quinones in the respiratory chain. The immediate electron acceptor for the enzyme in this species is believed to be ubiquinone. Couples the redox reaction to proton translocation (for every two electrons transferred, four hydrogen ions are translocated across the cytoplasmic membrane), and thus conserves the redox energy in a proton gradient. The chain is NADH-quinone oxidoreductase subunit K from Paraburkholderia phymatum (strain DSM 17167 / CIP 108236 / LMG 21445 / STM815) (Burkholderia phymatum).